The primary structure comprises 631 residues: Dolichyl-diphosphooligosaccharide--protein glycosyltransferase subunit 2 (631 aa).

Positions Met1–Ala22 are cleaved as a signal peptide. The Lumenal segment spans residues Leu23–Val540. The N-linked (GlcNAc...) asparagine glycan is linked to Asn106. A Glycyl lysine isopeptide (Lys-Gly) (interchain with G-Cter in ubiquitin) cross-link involves residue Lys154. A helical membrane pass occupies residues Val541–Ile561. Residues Arg562–Thr571 lie on the Cytoplasmic side of the membrane. The chain crosses the membrane as a helical span at residues Phe572 to Val592. Topologically, residues Tyr593–Gln596 are lumenal. Residues Leu597–Gly617 form a helical membrane-spanning segment. At Asn618–His631 the chain is on the cytoplasmic side.

It belongs to the SWP1 family. As to quaternary structure, component of the oligosaccharyltransferase (OST) complex. OST exists in two different complex forms which contain common core subunits RPN1, RPN2, OST48, OST4, DAD1 and TMEM258, either STT3A or STT3B as catalytic subunits, and form-specific accessory subunits. STT3A complex assembly occurs through the formation of 3 subcomplexes. Subcomplex 1 contains RPN1 and TMEM258, subcomplex 2 contains the STT3A-specific subunits STT3A, DC2/OSTC, and KCP2 as well as the core subunit OST4, and subcomplex 3 contains RPN2, DAD1, and OST48. The STT3A complex can form stable complexes with the Sec61 complex or with both the Sec61 and TRAP complexes. Interacts with DDI2. Interacts with TMEM35A/NACHO.

It is found in the endoplasmic reticulum. The protein resides in the endoplasmic reticulum membrane. The protein operates within protein modification; protein glycosylation. Subunit of the oligosaccharyl transferase (OST) complex that catalyzes the initial transfer of a defined glycan (Glc(3)Man(9)GlcNAc(2) in eukaryotes) from the lipid carrier dolichol-pyrophosphate to an asparagine residue within an Asn-X-Ser/Thr consensus motif in nascent polypeptide chains, the first step in protein N-glycosylation. N-glycosylation occurs cotranslationally and the complex associates with the Sec61 complex at the channel-forming translocon complex that mediates protein translocation across the endoplasmic reticulum (ER). All subunits are required for a maximal enzyme activity. The polypeptide is Dolichyl-diphosphooligosaccharide--protein glycosyltransferase subunit 2 (Bos taurus (Bovine)).